Here is a 475-residue protein sequence, read N- to C-terminus: Protein nucleotidyltransferase YdiU (475 aa).

8 residues coordinate ATP: Gly-82, Gly-84, Arg-85, Lys-105, Asp-117, Gly-118, Arg-168, and Arg-175. Residue Asp-240 is the Proton acceptor of the active site. Mg(2+) contacts are provided by Asn-241 and Asp-250. Asp-250 is an ATP binding site.

The protein belongs to the SELO family. Requires Mg(2+) as cofactor. It depends on Mn(2+) as a cofactor.

The catalysed reaction is L-seryl-[protein] + ATP = 3-O-(5'-adenylyl)-L-seryl-[protein] + diphosphate. It carries out the reaction L-threonyl-[protein] + ATP = 3-O-(5'-adenylyl)-L-threonyl-[protein] + diphosphate. It catalyses the reaction L-tyrosyl-[protein] + ATP = O-(5'-adenylyl)-L-tyrosyl-[protein] + diphosphate. The enzyme catalyses L-histidyl-[protein] + UTP = N(tele)-(5'-uridylyl)-L-histidyl-[protein] + diphosphate. The catalysed reaction is L-seryl-[protein] + UTP = O-(5'-uridylyl)-L-seryl-[protein] + diphosphate. It carries out the reaction L-tyrosyl-[protein] + UTP = O-(5'-uridylyl)-L-tyrosyl-[protein] + diphosphate. In terms of biological role, nucleotidyltransferase involved in the post-translational modification of proteins. It can catalyze the addition of adenosine monophosphate (AMP) or uridine monophosphate (UMP) to a protein, resulting in modifications known as AMPylation and UMPylation. The sequence is that of Protein nucleotidyltransferase YdiU from Aeromonas hydrophila subsp. hydrophila (strain ATCC 7966 / DSM 30187 / BCRC 13018 / CCUG 14551 / JCM 1027 / KCTC 2358 / NCIMB 9240 / NCTC 8049).